The primary structure comprises 937 residues: MLKLLLGDPNARKLKRYSPIVSDINLLEEDISPLSDDELRSRTSDLRQRLFNAGDLHNQIPILDELLPEAFSIVREASKRVLGMRHFDVQLIGGMVLHEGQIAEMKTGEGKTLVATLPSYLNALTGRGVHVVTVNDYLARRDAEWMGQVHRFLGLSVGLIQQDMRPEERRRNYACDITYATNSELGFDYLRDNMAADISEVVQREFQFCVIDEVDSILIDEARTPLIISGQVEREQEKYQQAAQLAASLERSAEMGKDGIDPEGDYEVDEKQRSCTLTDEGFAKAEQTLGVQDLFDPQDPWAHYITNALKAKELFVKDVNYIVRDDEAVIVDEFTGRVMPGRRWSDGQHQAIEAKESLQIQPETQTLASITYQNFFLLYPRLAGMTGTAKTEEVEFEKTYKLQTTIVPTNRIRARQDWADQVYKTEVAKWRAVANETADIHKKARPVLVGTTSVEKSELLSSLLTEQDIPHNLLNAKPENVERESEIVAQAGRAGAVTIATNMAGRGTDIILGGNSDYMARLKLREVLLSRLVKPEDGPLPSLPVQDSATASGFSEASATVAPRVSASLYPCELSGPTDQLLAQLARDLVKAWGDRALSVLDLEERIATAAEKAPTDDAQIQSLREAIAFVRGEYDAVVKEEEARVRDAGGLHVIGTERHESRRVDNQLRGRAGRQGDPGSTRFFLSLGDNLLRIFGGERVAGLMNAFRVEEDMPIESGMLTRSLEGAQKKVETYYYDIRKQVFEYDEVMNNQRRAVYSERRRVLDGRALKKQVIGYGERTMNEIVEAYVNPDLPPEEWDLDQLVGKVKEFIYLLEDLTPAQVNGLGMDELKAFLQEQLRNAYDLKEGQIDQQRPGLMREAERFFILQQIDTLWREHLQAMDALRESVGLRGYGQKDPLIEYKNEGYDMFLEMMTNMRRNVIYSMFMFQPAAPQNQN.

Residues glutamine 90, 108–112 (GEGKT), and aspartate 509 each bind ATP.

It belongs to the SecA family. Monomer and homodimer. Part of the essential Sec protein translocation apparatus which comprises SecA, SecYEG and auxiliary proteins SecDF. Other proteins may also be involved.

It is found in the cell inner membrane. It localises to the cellular thylakoid membrane. The protein resides in the cytoplasm. The catalysed reaction is ATP + H2O + cellular proteinSide 1 = ADP + phosphate + cellular proteinSide 2.. Its function is as follows. Part of the Sec protein translocase complex. Interacts with the SecYEG preprotein conducting channel. Has a central role in coupling the hydrolysis of ATP to the transfer of proteins into and across the cell membrane, serving as an ATP-driven molecular motor driving the stepwise translocation of polypeptide chains across the membrane. Probably participates in protein translocation into and across both the cytoplasmic and thylakoid membranes in cyanobacterial cells. This is Protein translocase subunit SecA from Synechococcus sp. (strain CC9902).